The following is a 559-amino-acid chain: Potassium-transporting ATPase potassium-binding subunit (559 aa).

12 consecutive transmembrane segments (helical) span residues 5–25 (GFLL…PLGT), 63–83 (LLAI…LLML), 131–151 (VGLT…VFAL), 173–193 (ITLW…IQQG), 254–274 (VQML…GEVV), 282–302 (AILW…MWAE), 327–347 (FGIL…CGAV), 356–376 (ALGG…FGGV), 379–399 (GLYG…LMVG), 416–436 (MIAL…ALAM), 483–503 (LLLA…VMAI), and 525–545 (ALFI…TFIP).

The protein belongs to the KdpA family. The system is composed of three essential subunits: KdpA, KdpB and KdpC.

Its subcellular location is the cell inner membrane. Functionally, part of the high-affinity ATP-driven potassium transport (or Kdp) system, which catalyzes the hydrolysis of ATP coupled with the electrogenic transport of potassium into the cytoplasm. This subunit binds the periplasmic potassium ions and delivers the ions to the membrane domain of KdpB through an intramembrane tunnel. This Klebsiella pneumoniae (strain 342) protein is Potassium-transporting ATPase potassium-binding subunit.